A 701-amino-acid chain; its full sequence is Acetyl-coenzyme A synthetase, cytoplasmic (701 aa).

A disordered region spans residues 1–41; that stretch reads MGLPEERVRSGSGSRGQEEAGAGGRARSWSPPPEVSRSAHV. An interaction with TFEB region spans residues 1-107; it reads MGLPEERVRS…GATTNICYNV (107 aa). 3 positions are modified to phosphoserine: Ser-28, Ser-30, and Ser-36. 219–222 serves as a coordination point for CoA; sequence RGEK. Phosphoserine is present on residues Ser-263, Ser-265, and Ser-267. Thr-363 lines the CoA pocket. Residue Lys-418 is modified to N6-acetyllysine. Residues 439 to 441, 463 to 468, Asp-552, and Arg-567 contribute to the ATP site; these read GEP and DTFWQT. CoA is bound by residues Ser-575 and Arg-636. The short motif at 656-668 is the Nuclear localization signal element; it reads KTRSGKIMRRVLR. Ser-659 bears the Phosphoserine; by AMPK mark. Lys-661 is modified (N6-acetyllysine).

It belongs to the ATP-dependent AMP-binding enzyme family. Monomer. Interacts with TFEB. AMPK-mediated phosphorylated form at Ser-659 interacts with KPNA1; this interaction results in nuclear translocation of ACSS2. Interacts with the 'Thr-172' phosphorylated form of PRKAA2. Interacts with CREBBP. Post-translationally, reversibly acetylated at Lys-661. The acetyl-CoA synthase activity is inhibited by acetylation and activated by deacetylation mediated by the deacetylases SIRT1 and SIRT3. Glucose deprivation results in its AMPK-dependent phosphorylation at Ser-659, which leads to exposure of its nuclear localization signal, required for its interaction with KPNA1 and subsequent translocation to the nucleus.

It localises to the cytoplasm. Its subcellular location is the cytosol. The protein localises to the nucleus. It catalyses the reaction acetate + ATP + CoA = acetyl-CoA + AMP + diphosphate. The catalysed reaction is propanoate + ATP + CoA = propanoyl-CoA + AMP + diphosphate. With respect to regulation, inhibited by acetylation at Lys-661 and activated by deacetylation mediated by the deacetylases SIRT1 and SIRT3. In terms of biological role, catalyzes the synthesis of acetyl-CoA from short-chain fatty acids. Acetate is the preferred substrate. Can also utilize propionate with a much lower affinity. Nuclear ACSS2 promotes glucose deprivation-induced lysosomal biogenesis and autophagy, tumor cell survival and brain tumorigenesis. Glucose deprivation results in AMPK-mediated phosphorylation of ACSS2 leading to its translocation to the nucleus where it binds to TFEB and locally produces acetyl-CoA for histone acetylation in the promoter regions of TFEB target genes thereby activating their transcription. The regulation of genes associated with autophagy and lysosomal activity through ACSS2 is important for brain tumorigenesis and tumor survival. Acts as a chromatin-bound transcriptional coactivator that up-regulates histone acetylation and expression of neuronal genes. Can be recruited to the loci of memory-related neuronal genes to maintain a local acetyl-CoA pool, providing the substrate for histone acetylation and promoting the expression of specific genes, which is essential for maintaining long-term spatial memory. This is Acetyl-coenzyme A synthetase, cytoplasmic (ACSS2) from Homo sapiens (Human).